The sequence spans 159 residues: MKIKVGFGFDVHQLVEGRELWLGGILLEHEKGLLGHSDADVLVHAICDALLGAANMRDIGYHFPDNAGEYKNIDSKILLKKTVELIATKGYQIGNIDATICAERPKLKAHIPSMQQVLAEVMGIDADDISIKATTTEKLGFTGREEGISAYATVLINRV.

Residues aspartate 10 and histidine 12 each contribute to the a divalent metal cation site. 4-CDP-2-C-methyl-D-erythritol 2-phosphate is bound by residues 10-12 (DVH) and 36-37 (HS). Residue histidine 44 participates in a divalent metal cation binding. Residues 58–60 (DIG), 134–137 (TTTE), phenylalanine 141, and arginine 144 each bind 4-CDP-2-C-methyl-D-erythritol 2-phosphate.

Belongs to the IspF family. As to quaternary structure, homotrimer. It depends on a divalent metal cation as a cofactor.

It catalyses the reaction 4-CDP-2-C-methyl-D-erythritol 2-phosphate = 2-C-methyl-D-erythritol 2,4-cyclic diphosphate + CMP. Its pathway is isoprenoid biosynthesis; isopentenyl diphosphate biosynthesis via DXP pathway; isopentenyl diphosphate from 1-deoxy-D-xylulose 5-phosphate: step 4/6. Functionally, involved in the biosynthesis of isopentenyl diphosphate (IPP) and dimethylallyl diphosphate (DMAPP), two major building blocks of isoprenoid compounds. Catalyzes the conversion of 4-diphosphocytidyl-2-C-methyl-D-erythritol 2-phosphate (CDP-ME2P) to 2-C-methyl-D-erythritol 2,4-cyclodiphosphate (ME-CPP) with a corresponding release of cytidine 5-monophosphate (CMP). This Bacteroides fragilis (strain ATCC 25285 / DSM 2151 / CCUG 4856 / JCM 11019 / LMG 10263 / NCTC 9343 / Onslow / VPI 2553 / EN-2) protein is 2-C-methyl-D-erythritol 2,4-cyclodiphosphate synthase.